A 271-amino-acid chain; its full sequence is Putative phosphoenolpyruvate synthase regulatory protein (271 aa).

151 to 158 contacts ADP; it reads GVSRSGKT.

Belongs to the pyruvate, phosphate/water dikinase regulatory protein family. PSRP subfamily.

The catalysed reaction is [pyruvate, water dikinase] + ADP = [pyruvate, water dikinase]-phosphate + AMP + H(+). It carries out the reaction [pyruvate, water dikinase]-phosphate + phosphate + H(+) = [pyruvate, water dikinase] + diphosphate. Bifunctional serine/threonine kinase and phosphorylase involved in the regulation of the phosphoenolpyruvate synthase (PEPS) by catalyzing its phosphorylation/dephosphorylation. The sequence is that of Putative phosphoenolpyruvate synthase regulatory protein from Burkholderia lata (strain ATCC 17760 / DSM 23089 / LMG 22485 / NCIMB 9086 / R18194 / 383).